We begin with the raw amino-acid sequence, 159 residues long: Heat shock protein beta-9 (159 aa).

In terms of domain architecture, sHSP spans 36-147 (LLRDSPAAQE…EAQTGPSPRL (112 aa)).

The protein belongs to the small heat shock protein (HSP20) family. As to expression, testis specific.

It localises to the cytoplasm. The protein resides in the nucleus. The sequence is that of Heat shock protein beta-9 (HSPB9) from Homo sapiens (Human).